Consider the following 658-residue polypeptide: Phosphomethylpyrimidine synthase (658 aa).

A disordered region spans residues 1–22 (MNNSTDAVNPAKKPQTRREKRE). Residues Asn-248, Met-277, Tyr-306, His-342, 362 to 364 (SRG), 403 to 406 (DGLR), and Glu-442 contribute to the substrate site. Residue His-446 participates in Zn(2+) binding. Tyr-469 serves as a coordination point for substrate. His-510 contacts Zn(2+). Cys-590, Cys-593, and Cys-598 together coordinate [4Fe-4S] cluster.

The protein belongs to the ThiC family. In terms of assembly, homodimer. [4Fe-4S] cluster serves as cofactor.

The enzyme catalyses 5-amino-1-(5-phospho-beta-D-ribosyl)imidazole + S-adenosyl-L-methionine = 4-amino-2-methyl-5-(phosphooxymethyl)pyrimidine + CO + 5'-deoxyadenosine + formate + L-methionine + 3 H(+). It participates in cofactor biosynthesis; thiamine diphosphate biosynthesis. Its function is as follows. Catalyzes the synthesis of the hydroxymethylpyrimidine phosphate (HMP-P) moiety of thiamine from aminoimidazole ribotide (AIR) in a radical S-adenosyl-L-methionine (SAM)-dependent reaction. In Colwellia psychrerythraea (strain 34H / ATCC BAA-681) (Vibrio psychroerythus), this protein is Phosphomethylpyrimidine synthase.